We begin with the raw amino-acid sequence, 201 residues long: Nucleoside triphosphate pyrophosphatase (201 aa).

Catalysis depends on Asp77, which acts as the Proton acceptor.

This sequence belongs to the Maf family. Requires a divalent metal cation as cofactor.

The protein localises to the cytoplasm. It catalyses the reaction a ribonucleoside 5'-triphosphate + H2O = a ribonucleoside 5'-phosphate + diphosphate + H(+). The enzyme catalyses a 2'-deoxyribonucleoside 5'-triphosphate + H2O = a 2'-deoxyribonucleoside 5'-phosphate + diphosphate + H(+). Functionally, nucleoside triphosphate pyrophosphatase. May have a dual role in cell division arrest and in preventing the incorporation of modified nucleotides into cellular nucleic acids. The protein is Nucleoside triphosphate pyrophosphatase of Rickettsia akari (strain Hartford).